Consider the following 417-residue polypeptide: NADH-quinone oxidoreductase subunit D (417 aa).

The protein belongs to the complex I 49 kDa subunit family. In terms of assembly, NDH-1 is composed of 14 different subunits. Subunits NuoB, C, D, E, F, and G constitute the peripheral sector of the complex.

Its subcellular location is the cell inner membrane. It catalyses the reaction a quinone + NADH + 5 H(+)(in) = a quinol + NAD(+) + 4 H(+)(out). Functionally, NDH-1 shuttles electrons from NADH, via FMN and iron-sulfur (Fe-S) centers, to quinones in the respiratory chain. The immediate electron acceptor for the enzyme in this species is believed to be ubiquinone. Couples the redox reaction to proton translocation (for every two electrons transferred, four hydrogen ions are translocated across the cytoplasmic membrane), and thus conserves the redox energy in a proton gradient. This Paracidovorax citrulli (strain AAC00-1) (Acidovorax citrulli) protein is NADH-quinone oxidoreductase subunit D.